The chain runs to 490 residues: Homoserine O-acetyltransferase (490 aa).

The AB hydrolase-1 domain maps to 47–355 (NAILVCHALT…DYGHDAFLLE (309 aa)). Serine 152 acts as the Nucleophile in catalysis. Position 222 (arginine 222) interacts with substrate. Active-site residues include aspartate 316 and histidine 349. Residue aspartate 350 participates in substrate binding. 2 consecutive CBS domains span residues 376 to 436 (MKTD…LEDV) and 437 to 490 (MTKD…ISSY).

Belongs to the AB hydrolase superfamily. MetX family. As to quaternary structure, homodimer.

It localises to the cytoplasm. The catalysed reaction is L-homoserine + acetyl-CoA = O-acetyl-L-homoserine + CoA. Its pathway is amino-acid biosynthesis; L-methionine biosynthesis via de novo pathway; O-acetyl-L-homoserine from L-homoserine: step 1/1. Transfers an acetyl group from acetyl-CoA to L-homoserine, forming acetyl-L-homoserine. In Methanobrevibacter ruminantium (strain ATCC 35063 / DSM 1093 / JCM 13430 / OCM 146 / M1) (Methanobacterium ruminantium), this protein is Homoserine O-acetyltransferase.